A 311-amino-acid polypeptide reads, in one-letter code: Syndecan-1 (311 aa).

The first 22 residues, M1 to L22, serve as a signal peptide directing secretion. Residues H23–G255 lie on the Extracellular side of the membrane. 2 disordered regions span residues P31–I85 and T141–S244. Acidic residues predominate over residues E32 to D42. An O-linked (Xyl...) (chondroitin sulfate) serine glycan is attached at S37. N43 carries an N-linked (GlcNAc...) asparagine glycan. O-linked (Xyl...) (heparan sulfate) serine glycans are attached at residues S45 and S47. A compositionally biased stretch (low complexity) spans T71–A84. 2 stretches are compositionally biased toward basic and acidic residues: residues P151 to T162 and G169 to E180. O-linked (Xyl...) (chondroitin sulfate) serine glycosylation is found at S204 and S214. The segment covering G215 to G226 has biased composition (low complexity). A helical membrane pass occupies residues G256 to L276. Topologically, residues Y277–A311 are cytoplasmic. The segment at G285–A311 is disordered. Residue S286 is modified to Phosphoserine.

The protein belongs to the syndecan proteoglycan family. In terms of assembly, interacts with CDCP1. Interacts (via C-terminus) with TIAM1 (via PDZ domain). Interacts with MDK. Shedding is enhanced by a number of factors such as heparanase, thrombin or EGF. Also by stress and wound healing. PMA-mediated shedding is inhibited by TIMP3.

It localises to the membrane. The protein localises to the secreted. It is found in the extracellular exosome. Cell surface proteoglycan that contains both heparan sulfate and chondroitin sulfate and that links the cytoskeleton to the interstitial matrix. Regulates exosome biogenesis in concert with SDCBP and PDCD6IP. Able to induce its own expression in dental mesenchymal cells and also in the neighboring dental epithelial cells via an MSX1-mediated pathway. This is Syndecan-1 from Bos taurus (Bovine).